We begin with the raw amino-acid sequence, 455 residues long: tRNA modification GTPase MnmE (455 aa).

Residues arginine 24, glutamate 81, and lysine 120 each coordinate (6S)-5-formyl-5,6,7,8-tetrahydrofolate. In terms of domain architecture, TrmE-type G spans 216-378 (GMTVVIAGRP…LREHLKACMG (163 aa)). Asparagine 226 lines the K(+) pocket. Residues 226–231 (NAGKSS), 245–251 (TDIAGTT), 270–273 (DTAG), 335–338 (NKAD), and 359–361 (SAR) each bind GTP. Serine 230 contacts Mg(2+). Threonine 245, isoleucine 247, and threonine 250 together coordinate K(+). Mg(2+) is bound at residue threonine 251. Lysine 455 is a (6S)-5-formyl-5,6,7,8-tetrahydrofolate binding site.

It belongs to the TRAFAC class TrmE-Era-EngA-EngB-Septin-like GTPase superfamily. TrmE GTPase family. As to quaternary structure, homodimer. Heterotetramer of two MnmE and two MnmG subunits. It depends on K(+) as a cofactor.

It localises to the cytoplasm. Its function is as follows. Exhibits a very high intrinsic GTPase hydrolysis rate. Involved in the addition of a carboxymethylaminomethyl (cmnm) group at the wobble position (U34) of certain tRNAs, forming tRNA-cmnm(5)s(2)U34. This chain is tRNA modification GTPase MnmE, found in Pseudomonas aeruginosa (strain UCBPP-PA14).